We begin with the raw amino-acid sequence, 337 residues long: Exopolysaccharide phosphotransferase cps2G (337 aa).

This sequence belongs to the stealth family.

The polypeptide is Exopolysaccharide phosphotransferase cps2G (cps2G) (Lactiplantibacillus plantarum (strain ATCC BAA-793 / NCIMB 8826 / WCFS1) (Lactobacillus plantarum)).